Consider the following 657-residue polypeptide: Methionine--tRNA ligase (657 aa).

The 'HIGH' region signature appears at 13–23; it reads YYPSGNLHIGH. The 'KMSKS' region signature appears at 308 to 312; the sequence is KMSKS. Lys-311 provides a ligand contact to ATP. The 101-residue stretch at 557 to 657 folds into the tRNA-binding domain; sequence DFDKVEIKAA…SAIPNGAVIK (101 aa).

Belongs to the class-I aminoacyl-tRNA synthetase family. MetG type 2B subfamily. In terms of assembly, homodimer.

The protein localises to the cytoplasm. It carries out the reaction tRNA(Met) + L-methionine + ATP = L-methionyl-tRNA(Met) + AMP + diphosphate. In terms of biological role, is required not only for elongation of protein synthesis but also for the initiation of all mRNA translation through initiator tRNA(fMet) aminoacylation. This Staphylococcus aureus (strain MW2) protein is Methionine--tRNA ligase.